Here is a 65-residue protein sequence, read N- to C-terminus: Large ribosomal subunit protein bL35 (65 aa).

It belongs to the bacterial ribosomal protein bL35 family.

This is Large ribosomal subunit protein bL35 from Proteus mirabilis (strain HI4320).